Reading from the N-terminus, the 322-residue chain is Lipoyl synthase (322 aa).

Basic and acidic residues predominate over residues 1-25; it reads MSQRITIDHRSAPALRHPEKAHRPD. The interval 1-29 is disordered; sequence MSQRITIDHRSAPALRHPEKAHRPDNPIQ. C61, C66, C72, C87, C91, C94, and S300 together coordinate [4Fe-4S] cluster. The Radical SAM core domain maps to 73 to 289; sequence WSQRHATMMI…AAAARSKGFL (217 aa).

This sequence belongs to the radical SAM superfamily. Lipoyl synthase family. [4Fe-4S] cluster serves as cofactor.

The protein resides in the cytoplasm. The catalysed reaction is [[Fe-S] cluster scaffold protein carrying a second [4Fe-4S](2+) cluster] + N(6)-octanoyl-L-lysyl-[protein] + 2 oxidized [2Fe-2S]-[ferredoxin] + 2 S-adenosyl-L-methionine + 4 H(+) = [[Fe-S] cluster scaffold protein] + N(6)-[(R)-dihydrolipoyl]-L-lysyl-[protein] + 4 Fe(3+) + 2 hydrogen sulfide + 2 5'-deoxyadenosine + 2 L-methionine + 2 reduced [2Fe-2S]-[ferredoxin]. The protein operates within protein modification; protein lipoylation via endogenous pathway; protein N(6)-(lipoyl)lysine from octanoyl-[acyl-carrier-protein]: step 2/2. Catalyzes the radical-mediated insertion of two sulfur atoms into the C-6 and C-8 positions of the octanoyl moiety bound to the lipoyl domains of lipoate-dependent enzymes, thereby converting the octanoylated domains into lipoylated derivatives. In Gluconobacter oxydans (strain 621H) (Gluconobacter suboxydans), this protein is Lipoyl synthase.